Here is a 221-residue protein sequence, read N- to C-terminus: MTVVKASVHGDPNIGAWIAASEEYAVVAPKVPDDIVERVKEALDVEVVRTTVAGSNLVGALLAVNSNGALFPRHAREHEIRVVRELGVEVDVLPSKMNAVGNLVLTNDHGALVHPDLDDHALEVIESVLGGRVVRGELGGVKTVGSAGVANSKGAVVHPGATEEEMERVSEVLGVDVEVGTVNRGSPYVGVGIVVNSKGAVVGEDTTGPELARLEDALYLI.

The protein belongs to the eIF-6 family.

Binds to the 50S ribosomal subunit and prevents its association with the 30S ribosomal subunit to form the 70S initiation complex. The protein is Translation initiation factor 6 of Methanopyrus kandleri (strain AV19 / DSM 6324 / JCM 9639 / NBRC 100938).